A 60-amino-acid polypeptide reads, in one-letter code: Cytotoxin 2a (60 aa).

4 cysteine pairs are disulfide-bonded: Cys-3-Cys-21, Cys-14-Cys-38, Cys-42-Cys-53, and Cys-54-Cys-59.

It belongs to the three-finger toxin family. Short-chain subfamily. Type IA cytotoxin sub-subfamily. In terms of assembly, monomer in solution; Homodimer and oligomer in the presence of negatively charged lipids forming a pore with a size ranging between 20 and 30 Angstroms. Expressed by the venom gland.

It localises to the secreted. The protein localises to the target cell membrane. Shows cytolytic activity on many different cells by forming pore in lipid membranes. In vivo, increases heart rate or kills the animal by cardiac arrest. In addition, it binds to heparin with high affinity, interacts with Kv channel-interacting protein 1 (KCNIP1) in a calcium-independent manner, and binds to integrin alpha-V/beta-3 (ITGAV/ITGB3) with moderate affinity. Preferentially binds acidic phospholipids like phosphatidylserine, phosphatidic acid and phosphatidyl glycerol. Has hemolytic activity towards human erythrocytes (EC(50)=1.024 uM) and cytolytic activity towards various cell lines. The sequence is that of Cytotoxin 2a from Naja naja (Indian cobra).